The following is a 383-amino-acid chain: Guanine nucleotide-binding protein alpha-1 subunit (383 aa).

The tract at residues 1-20 is disordered; sequence MGLLCSRSRHHTEDTDENTQ. Gly2 is lipidated: N-myristoyl glycine. Cys5 carries the S-palmitoyl cysteine lipid modification. The G-alpha domain maps to 37 to 383; it reads HIRKLLLLGA…RRNLLEAGLL (347 aa). Residues 40 to 53 form a G1 motif region; sequence KLLLLGAGESGKST. GTP is bound by residues Glu48, Ser49, Gly50, Lys51, Ser52, Thr53, Asp162, Leu187, Tyr188, Thr193, Gly221, Asn287, Lys288, Asp290, and Ala355. A Mg(2+)-binding site is contributed by Ser52. The segment at 185–193 is G2 motif; that stretch reads DVLYARVRT. Residue Thr193 participates in Mg(2+) binding. Residues 214 to 223 are G3 motif; the sequence is YRLFDVGGQR. The interval 283–290 is G4 motif; that stretch reads MLFLNKFD. The segment at 353–358 is G5 motif; sequence TTALDQ.

The protein belongs to the G-alpha family. In terms of assembly, g proteins are composed of 3 units; alpha, beta and gamma. The alpha chain contains the guanine nucleotide binding site. Interacts with RGS1, THF1, the pirin protein PRN1, GTG1 and GTG2. Binds to GCR1. May interact with ADT3. No interactions with RACK1A, RACK1B or RACK1C. Interacts with PLDALPHA1. Interacts with CAND2/PMTR1. Requires Mg(2+) as cofactor. As to expression, more abundant in roots and/or leaves.

The protein resides in the cell membrane. Its function is as follows. Exhibits a fast rate of basal nucleotide exchange. Guanine nucleotide-binding proteins (G proteins) are involved as modulators or transducers in various transmembrane signaling systems. Together with GCR1, may regulate the cell cycle via a signaling cascade that uses phosphatidylinositol-specific phospholipase C (PI-PLC) as an effector and inositol 1,4,5-trisphosphate (IP(3)) as a second messenger. Promotes abscisic acid (ABA) responses in guard cells. Involved in the blue light (BL) signaling. Together with GCR1 and ADT3, required for BL-mediated synthesis of phenylpyruvate and subsequently of phenylalanine (Phe), in etiolated seedlings. Modulates root architecture (e.g. lateral root formation). Negatively regulated by RGS1. In collaboration with CAND2/PMTR1, regulates the melatonin-mediated stomatal closure involving H(2)O(2) and Ca(2+) signals. This Arabidopsis thaliana (Mouse-ear cress) protein is Guanine nucleotide-binding protein alpha-1 subunit.